The chain runs to 375 residues: Histidine biosynthesis bifunctional protein HisB (375 aa).

A histidinol-phosphatase region spans residues 1 to 168; the sequence is MTPILFVDRD…GIAHELADAP (168 aa). The Nucleophile role is filled by Asp-8. Asp-8, Asp-10, and Asp-128 together coordinate Mg(2+). The Proton donor role is filled by Asp-10. An imidazoleglycerol-phosphate dehydratase region spans residues 169 to 375; that stretch reads RRAVVQRNTK…TALPSTKGAL (207 aa).

The protein in the N-terminal section; belongs to the histidinol-phosphatase family. It in the C-terminal section; belongs to the imidazoleglycerol-phosphate dehydratase family. The cofactor is Mg(2+).

It localises to the cytoplasm. It catalyses the reaction D-erythro-1-(imidazol-4-yl)glycerol 3-phosphate = 3-(imidazol-4-yl)-2-oxopropyl phosphate + H2O. The enzyme catalyses L-histidinol phosphate + H2O = L-histidinol + phosphate. Its pathway is amino-acid biosynthesis; L-histidine biosynthesis; L-histidine from 5-phospho-alpha-D-ribose 1-diphosphate: step 6/9. It functions in the pathway amino-acid biosynthesis; L-histidine biosynthesis; L-histidine from 5-phospho-alpha-D-ribose 1-diphosphate: step 8/9. This chain is Histidine biosynthesis bifunctional protein HisB, found in Xanthomonas campestris pv. campestris (strain B100).